Here is a 1259-residue protein sequence, read N- to C-terminus: Trafficking protein particle complex II-specific subunit 130 homolog (1259 aa).

Position 2 is an N-acetylalanine (A2). A disordered region spans residues 479–526 (GNIPEMFDGRPSFTEGSGLEASPRTPSSLKVQAPPMSRTNSSPGNFES).

Belongs to the TMEM1 family. In terms of assembly, part of the multisubunit TRAPP (transport protein particle) II complex composed of BET3, BET5, TRS20, TRS23, TRS31, TRS33, TRS65, TRS85, TRS120 and TRS130.

It is found in the golgi apparatus. The protein resides in the trans-Golgi network. Its subcellular location is the early endosome. In terms of biological role, specific subunit of the TRAPP II complex, a highly conserved vesicle tethering complex that is required for the proper transport of proteins in post-Golgi trafficking pathways to the growing cell plate in mitotic active cells. Required for the polarized and selective transport of PIN2, but not PIN1, to the plasma membrane. Not required for ER-to-Golgi as well as biosynthetic and endocytic vacuolar transport. This Arabidopsis thaliana (Mouse-ear cress) protein is Trafficking protein particle complex II-specific subunit 130 homolog.